A 950-amino-acid polypeptide reads, in one-letter code: Nonsense-mediated mRNA decay factor SMG8 (950 aa).

2 disordered regions span residues 560–607 (HTGK…LSPT) and 624–651 (NESQ…ADTE). A compositionally biased stretch (acidic residues) spans 568 to 582 (QDEDGEEDAEDEEGQ). Positions 593–607 (QNTASNGCSQPLSPT) are enriched in polar residues. A compositionally biased stretch (low complexity) spans 624 to 648 (NESQASSEQLSNSEQNSTSSGTSSA).

Belongs to the SMG8 family.

In terms of biological role, involved in nonsense-mediated decay (NMD) of mRNAs containing premature stop codons. Probable component of kinase complex containing nonC and recruited to stalled ribosomes. In Drosophila yakuba (Fruit fly), this protein is Nonsense-mediated mRNA decay factor SMG8.